Here is a 628-residue protein sequence, read N- to C-terminus: Kinesin-like protein subito (628 aa).

A disordered region spans residues 28-68; that stretch reads RFRPRPNKKMRLFDNIQESEEESFSEYSDTESEYKYQSSEA. The segment covering 44-58 has biased composition (acidic residues); that stretch reads QESEEESFSEYSDTE. Residues 87-479 enclose the Kinesin motor domain; it reads GPQVFLRLRP…LNFASIAKNI (393 aa). Position 169–176 (169–176) interacts with ATP; sequence GTSGSGKT. Residues 509–612 are a coiled coil; it reads DYTKELEDEN…KNPASDTDIS (104 aa). Positions 596–628 are disordered; it reads KDEIEELKNPASDTDISDDPNESKSPIEILDDD. The residue at position 607 (Ser607) is a Phosphoserine. Thr609 is modified (phosphothreonine). At Ser612 the chain carries Phosphoserine.

This sequence belongs to the TRAFAC class myosin-kinesin ATPase superfamily. Kinesin family.

It is found in the cytoplasm. Its subcellular location is the cytoskeleton. In terms of biological role, required during female meiosis for bipolar spindle formation in the absence of the centrosomes and chromosome homolog segregation. Also has roles in male meiosis and mitotic divisions of the early embryo. This is Kinesin-like protein subito (sub) from Drosophila melanogaster (Fruit fly).